Reading from the N-terminus, the 557-residue chain is Urocanate hydratase (557 aa).

NAD(+)-binding positions include 52-53 (GG), Q130, 176-178 (GMG), E196, 242-243 (NA), 263-267 (QTSAH), 273-274 (YL), and Y322. C410 is a catalytic residue. G492 lines the NAD(+) pocket.

Belongs to the urocanase family. NAD(+) serves as cofactor.

It is found in the cytoplasm. It carries out the reaction 4-imidazolone-5-propanoate = trans-urocanate + H2O. It participates in amino-acid degradation; L-histidine degradation into L-glutamate; N-formimidoyl-L-glutamate from L-histidine: step 2/3. Catalyzes the conversion of urocanate to 4-imidazolone-5-propionate. In Rhizobium meliloti (strain 1021) (Ensifer meliloti), this protein is Urocanate hydratase.